Reading from the N-terminus, the 809-residue chain is Origin of replication complex subunit 1A (809 aa).

The segment covering 1–47 (MASSLSSKAKTFKSPTKTPTKMYRKSYLSPSSTSLTPPQTPETLTPL) has biased composition (low complexity). The tract at residues 1-69 (MASSLSSKAK…LGNDPIDLPG (69 aa)) is disordered. A histone H3 binding region spans residues 160–185 (DPEIEDCQICFKSHTNTIMIECDDCL). Residues 163–213 (IEDCQICFKSHTNTIMIECDDCLGGFHLNCLKPPLKEVPEGDWICQFCEVK) form a PHD-type zinc finger. Zn(2+) contacts are provided by cysteine 166, cysteine 169, cysteine 181, cysteine 184, histidine 189, and cysteine 192. Residues 201 to 205 (PEGDW) are histone H3 binding. Zn(2+) is bound by residues cysteine 207 and cysteine 210. Residues 223–341 (PKPPEGKKLA…VHWGSFKRVA (119 aa)) enclose the BAH domain. The segment at 316–321 (ASNDGD) is histone H3 binding. The segment at 431-799 (PKSLPCRSKE…DDVAFALKDN (369 aa)) is necessary and sufficient for ORC complex assembly. ATP contacts are provided by residues 466-473 (GVPGTGKT) and 466-474 (GVPGTGKTI). Mg(2+) contacts are provided by aspartate 556 and glutamate 557. Residues glutamate 557, asparagine 590, and arginine 655 each contribute to the ATP site.

The protein belongs to the ORC1 family. As to quaternary structure, component of the origin recognition complex (ORC) composed of at least ORC1 (ORC1A or ORC1B), ORC2, ORC3, ORC4, ORC5 and ORC6. ORC is regulated in a cell-cycle and development dependent manner. It is sequentially assembled at the exit from anaphase of mitosis and disassembled as cells enter S phase. Interacts directly with ORC2, ORC3, ORC4 and ORC5. Binds mostly unmodified histone H3, and, with lower efficiency, H3K4me1 H3K4me2 and H3K4me3. Follow a cell-cycle regulation with a peak at the G1/S-phase. Mostly expressed in siliques, flowers and flower buds, and, to a lower extent, in roots, leaves and stems.

It localises to the nucleus. In terms of biological role, essential protein. Component of the origin recognition complex (ORC) that binds origins of replication. It has a role in both chromosomal replication and mating type transcriptional silencing. Binds to the ARS consensus sequence (ACS) of origins of replication. H3K4me3 effector that positively regulates the transcription of a subset of genes. This is Origin of replication complex subunit 1A from Arabidopsis thaliana (Mouse-ear cress).